The sequence spans 447 residues: uncharacterized protein (447 aa).

Transmembrane regions (helical) follow at residues 28–48 (IVIVSATYSISLDSTVLYPAV), 241–261 (IDASFTSIFYSVFMLSIYYAI), and 397–417 (PFVLNVITVADGPCSFSLSIF).

The protein resides in the membrane. This is an uncharacterized protein from Schizosaccharomyces pombe (strain 972 / ATCC 24843) (Fission yeast).